We begin with the raw amino-acid sequence, 482 residues long: Phenylalanine--tRNA ligase alpha subunit (482 aa).

Residues T327, 366–368 (QIE), and Y406 each bind L-phenylalanine. E408 contributes to the Mg(2+) binding site. Position 430 (F430) interacts with L-phenylalanine.

It belongs to the class-II aminoacyl-tRNA synthetase family. Phe-tRNA synthetase alpha subunit type 2 subfamily. As to quaternary structure, tetramer of two alpha and two beta subunits. The cofactor is Mg(2+).

It localises to the cytoplasm. The enzyme catalyses tRNA(Phe) + L-phenylalanine + ATP = L-phenylalanyl-tRNA(Phe) + AMP + diphosphate + H(+). This chain is Phenylalanine--tRNA ligase alpha subunit, found in Thermoplasma volcanium (strain ATCC 51530 / DSM 4299 / JCM 9571 / NBRC 15438 / GSS1).